We begin with the raw amino-acid sequence, 292 residues long: 33 kDa chaperonin (292 aa).

Disulfide bonds link C230-C232 and C263-C266.

Belongs to the HSP33 family. Post-translationally, under oxidizing conditions two disulfide bonds are formed involving the reactive cysteines. Under reducing conditions zinc is bound to the reactive cysteines and the protein is inactive.

The protein localises to the cytoplasm. Functionally, redox regulated molecular chaperone. Protects both thermally unfolding and oxidatively damaged proteins from irreversible aggregation. Plays an important role in the bacterial defense system toward oxidative stress. This Sodalis glossinidius (strain morsitans) protein is 33 kDa chaperonin.